Here is a 751-residue protein sequence, read N- to C-terminus: FAD-dependent monooxygenase atnA (751 aa).

The helical transmembrane segment at 8 to 28 threads the bilayer; the sequence is LIVGGGVAGLSLAIMLEAYGF. The FAD site is built by Glu34, Gly48, and Arg109. The active site involves Tyr218. FAD-binding residues include Asp311 and Ala324. 8 consecutive transmembrane segments (helical) span residues 446-466, 481-501, 508-528, 563-583, 590-610, 639-659, 663-683, and 706-726; these read PLAT…PWSV, SEVF…LWVI, LLIS…YWGW, ALLP…ALAS, DWWP…STFL, IAVV…AALL, IISL…ALIV, and AWAV…LAGA.

This sequence belongs to the paxM FAD-dependent monooxygenase family. Requires FAD as cofactor.

It is found in the membrane. The protein operates within secondary metabolite biosynthesis; terpenoid biosynthesis. In terms of biological role, FAD-dependent monooxygenase; part of the gene cluster that mediates the biosynthesis of the meroterpenoids arthripenoids. The pathway begins with the HR-PKS atnH that catalyzes two chain-extension steps to form a reduced triketide, which then primes the SAT domain in the NR-PKS atnG to initiate three more cycles of extension to give a linear hexaketide corresponding to the polyketide part of arthripenoids. The FAD-dependent monooxygenase atnJ then performs an oxidative decarboxylation at C11 of the atnH/atnG product, via an electrophilic aromatic hydroxylation with concomitant ipso-decarboxylation. The membrane-bound polyprenyl transferase atnF then introduces a farnesyl group before the FAD-dependent monooxygenase atnK functions as the first epoxidase on terminal C12'-C13' olefin, followed by a second epoxidation on C7'-C8' catalyzed by atnA. The terpene cyclase/mutase atnI then initiates the sequential tricyclic ring formation through protonation of the terminal epoxide and catalyzes the regioselective and stereoselective 6/6/6-tricyclic ring formation. The cytochrome P450 monooxygenase atnM is responsible for hydroxylating both C1' and C10'. The next steps may involve ketoreduction and acetyl transfer by the ketoreductase atnB and the acetyltransferase atnC, and lead to the production of arthripenoid B, the final biosynthetic product of the atn cluster. The hydroquinone moiety in arthripenoid B is prone to undergo spontaneous oxidation to afford a benzoquinone compound, a key intermediate for generating structure diversity. For instance, addition of a cysteine followed by ring contraction gives arthripenoid A, tautomerization gives the main product arthripenoid C, addition of a molecular of water or amine affords arthripenoid D or E, respectively, and loss of one water forms arthripenoid F. The sequence is that of FAD-dependent monooxygenase atnA from Arthrinium sp.